The sequence spans 569 residues: MSKGVKSKTRSESKPKAHKKQSDTNGTKRKRENEEEISSDEEEADNEKLVSELDQNFDDVAELLDGDVADFKEEKKQKKNKEPKTVSENALQPYAQADESTSGSDKFEDLGLSEPTMRAIKDMGFEKMTKVQEKTIPPLLAGRDVLGAAKTGSGKTLAFLIPAIEMLYSLKFKPRNGTGVIVVSPTRELALQIFGVARDLMAHHSQTLGIVIGGANRRQEADKLMKGVNLLIATPGRLLDHLQNTKGFIFKNLKALVIDEADRILEIGFEDEMKQIIKVLPSDERQSMLFSATQTTKVEDLARISLRAGPLYINVVPETEVSTADGLEQGYVTCDSDMRFLLLFSFLRRNIKKKIIVFLSSCNCVKYFGELLNYIDLPVLDLHGKQKQQKRTNTFFEFCNAKQGILICTDVAARGLDIPAVDWIIQFDPPDDPRDYIHRVGRTARGTGGKGKSLMFLTPSELGFLRYLKAANVPLNEYEFPTNKIANIQSQLTKLIKGNYWLHQSAKDGYRAYLQAYASHHLKTVYQIDKLDLVKVAKSFGFDVPPKVNISIGASGKSIEKKHKKQRRQ.

2 disordered regions span residues 1–57 (MSKG…DQNF) and 71–110 (FKEE…FEDL). Residues 34-45 (EEEISSDEEEAD) show a composition bias toward acidic residues. Over residues 71–85 (FKEEKKQKKNKEPKT) the composition is skewed to basic and acidic residues. Residues 105 to 133 (DKFEDLGLSEPTMRAIKDMGFEKMTKVQE) carry the Q motif motif. The region spanning 136 to 312 (IPPLLAGRDV…RISLRAGPLY (177 aa)) is the Helicase ATP-binding domain. 149 to 156 (AKTGSGKT) serves as a coordination point for ATP. The DEAD box signature appears at 259-262 (DEAD). In terms of domain architecture, Helicase C-terminal spans 326-496 (GLEQGYVTCD…NIQSQLTKLI (171 aa)).

It belongs to the DEAD box helicase family. DDX18/HAS1 subfamily. As to quaternary structure, associates in the nucleolus with the 60S and pre-60S ribosomal subunits.

The protein localises to the nucleus. It is found in the nucleolus. The catalysed reaction is ATP + H2O = ADP + phosphate + H(+). ATP-dependent RNA helicase involved in 40S ribosomal subunit biogenesis. Required for the processing and cleavage of 35S pre-rRNA at sites A0, A1, and A2, leading to mature 18S rRNA. The chain is ATP-dependent RNA helicase HAS1 (HAS1) from Meyerozyma guilliermondii (strain ATCC 6260 / CBS 566 / DSM 6381 / JCM 1539 / NBRC 10279 / NRRL Y-324) (Yeast).